Reading from the N-terminus, the 90-residue chain is Acylphosphatase (90 aa).

The region spanning 3–90 (HYHAIITGRV…AHYQDFRIKG (88 aa)) is the Acylphosphatase-like domain. Active-site residues include Arg18 and Asn36.

It belongs to the acylphosphatase family.

The enzyme catalyses an acyl phosphate + H2O = a carboxylate + phosphate + H(+). This is Acylphosphatase (acyP) from Bacillus pumilus (strain SAFR-032).